Consider the following 423-residue polypeptide: Peroxisomal membrane protein PMP47A (423 aa).

3 Solcar repeats span residues 6–120 (YDDL…TGKT), 142–230 (LSVW…LKSF), and 239–373 (ITPV…LLIL). A helical transmembrane segment spans residues 12-32 (AFAGAGGGLLSMTLTYPLVTL). Positions 43-53 (KKDQEKEKENS) are enriched in basic and acidic residues. The disordered stretch occupies residues 43–70 (KKDQEKEKENSNEDGSLSPKSSNTSDVS). A compositionally biased stretch (polar residues) spans 55–70 (EDGSLSPKSSNTSDVS). 4 helical membrane-spanning segments follow: residues 98 to 118 (SALF…ELTG), 148 to 168 (MAAG…IWVA), 204 to 224 (FTGI…YTIF), and 245 to 265 (LLLG…YITL). Residues 278–308 (SEDVEKERTDSVQSLPEDGSDEDNLKENSAK) form a disordered region. Residues 353–373 (LLQSILNAAFLFYFKEELLIL) traverse the membrane as a helical segment.

It belongs to the mitochondrial carrier (TC 2.A.29) family.

The protein localises to the peroxisome membrane. May have transport activity. In Candida boidinii (Yeast), this protein is Peroxisomal membrane protein PMP47A (PMP47A).